We begin with the raw amino-acid sequence, 178 residues long: ATP-dependent protease subunit HslV (178 aa).

The active site involves threonine 5. Residues serine 161, cysteine 164, and threonine 167 each contribute to the Na(+) site.

This sequence belongs to the peptidase T1B family. HslV subfamily. A double ring-shaped homohexamer of HslV is capped on each side by a ring-shaped HslU homohexamer. The assembly of the HslU/HslV complex is dependent on binding of ATP.

The protein localises to the cytoplasm. The enzyme catalyses ATP-dependent cleavage of peptide bonds with broad specificity.. Its activity is regulated as follows. Allosterically activated by HslU binding. Functionally, protease subunit of a proteasome-like degradation complex believed to be a general protein degrading machinery. This is ATP-dependent protease subunit HslV from Syntrophomonas wolfei subsp. wolfei (strain DSM 2245B / Goettingen).